A 202-amino-acid polypeptide reads, in one-letter code: Glycerol-3-phosphate acyltransferase (202 aa).

Transmembrane regions (helical) follow at residues 11–31, 87–107, 116–136, and 158–178; these read VLIA…GLIL, PALA…WLGF, FIGV…AIWL, and LILW…LAAL.

It belongs to the PlsY family. In terms of assembly, probably interacts with PlsX.

It is found in the cell inner membrane. It catalyses the reaction an acyl phosphate + sn-glycerol 3-phosphate = a 1-acyl-sn-glycero-3-phosphate + phosphate. It functions in the pathway lipid metabolism; phospholipid metabolism. Catalyzes the transfer of an acyl group from acyl-phosphate (acyl-PO(4)) to glycerol-3-phosphate (G3P) to form lysophosphatidic acid (LPA). This enzyme utilizes acyl-phosphate as fatty acyl donor, but not acyl-CoA or acyl-ACP. This chain is Glycerol-3-phosphate acyltransferase, found in Methylorubrum extorquens (strain PA1) (Methylobacterium extorquens).